Here is a 709-residue protein sequence, read N- to C-terminus: Dual specificity calcium/calmodulin-dependent 3',5'-cyclic nucleotide phosphodiesterase 1C (709 aa).

An N-acetylmethionine modification is found at Met-1. The segment at 123 to 146 is calmodulin-binding; sequence EKPRFKSIVHAVQAGIFVERMYRR. The region spanning 151–528 is the PDEase domain; sequence VGLSYPPAVI…ERWRAKVPKE (378 aa). His-228 serves as the catalytic Proton donor. Residues His-232, His-268, Asp-269, and Asp-376 each contribute to the Zn(2+) site. Asp-269 contributes to the Mg(2+) binding site. 2 disordered regions span residues 453–495 and 523–650; these read LIDE…APIN and AKVP…TCRL. Over residues 483 to 495 the composition is skewed to polar residues; the sequence is VKTSGSEGSAPIN. Basic and acidic residues predominate over residues 523-556; it reads AKVPKEEKAKKEAEEKARLAAEEQQKEMEAKSQA. Polar residues predominate over residues 571–581; it reads ETKNQVNGTRA. Composition is skewed to basic and acidic residues over residues 582–598 and 606–633; these read NKSDNPRGKNSKAEKSS and DFKDGKNKTDKKDHSNIGNDSKKTDGTK.

This sequence belongs to the cyclic nucleotide phosphodiesterase family. PDE1 subfamily. As to quaternary structure, homodimer. Zn(2+) is required as a cofactor. Requires Mg(2+) as cofactor. Isoform PDE1C2 is present in the heart and brain and, at lower levels in the lung, liver, kidney and skeletal muscle. Isoform PDE1C1 is expressed in the heart and brain and, at lower levels in lung. Also expressed at low levels in uterus and testis.

It is found in the lysosome. The enzyme catalyses a nucleoside 3',5'-cyclic phosphate + H2O = a nucleoside 5'-phosphate + H(+). It catalyses the reaction 3',5'-cyclic GMP + H2O = GMP + H(+). The catalysed reaction is 3',5'-cyclic AMP + H2O = AMP + H(+). Its activity is regulated as follows. Type I PDE are activated by the binding of calmodulin in the presence of Ca(2+). In terms of biological role, calmodulin-dependent cyclic nucleotide phosphodiesterase with a dual specificity for the second messengers cAMP and cGMP, which are key regulators of many important physiological processes. Has a high affinity for both cAMP and cGMP. Modulates the amplitude and duration of the cAMP signal in sensory cilia in response to odorant stimulation, hence contributing to the generation of action potentials. Regulates smooth muscle cell proliferation. Regulates the stability of growth factor receptors, including PDGFRB. This Homo sapiens (Human) protein is Dual specificity calcium/calmodulin-dependent 3',5'-cyclic nucleotide phosphodiesterase 1C.